A 211-amino-acid chain; its full sequence is MASNTAPKNVVTINQKLVLLGDSAVGKSSLVLRFVKDQFDDYRESTIGAAFLTQTLPIDENTSVKLEIWDTAGQERYKSLAPMYYRNANCAIVVYDITQAASLEKAKSWIKELQRQAPEGIVIALAGNKLDLAQERRAVEKADAEAYAAEANLLFFETSAKTAENVNELFTAIAKKLPLEDKLNQARGAVNRGVNLSEARPAAQPSGSCSC.

GTP is bound at residue 21-28; that stretch reads GDSAVGKS. Residues 43–51 carry the Effector region motif; the sequence is RESTIGAAF. GTP is bound by residues 70 to 74 and 128 to 131; these read DTAGQ and NKLD. S-geranylgeranyl cysteine attachment occurs at residues cysteine 209 and cysteine 211. Cysteine 211 carries the cysteine methyl ester modification.

The protein belongs to the small GTPase superfamily. Rab family.

The protein resides in the cell membrane. Protein transport. Probably involved in vesicular traffic. This chain is GTP-binding protein ypt5 (ypt5), found in Schizosaccharomyces pombe (strain 972 / ATCC 24843) (Fission yeast).